The following is a 389-amino-acid chain: Chalcone synthase (389 aa).

Active-site residues include Cys164, His303, and Asn336.

It belongs to the thiolase-like superfamily. Chalcone/stilbene synthases family. In terms of assembly, homodimer. Mainly expressed in flowers, to a lower extent in young leaves, and barely in mature leaves and twigs.

The enzyme catalyses (E)-4-coumaroyl-CoA + 3 malonyl-CoA + 3 H(+) = 2',4,4',6'-tetrahydroxychalcone + 3 CO2 + 4 CoA. Its pathway is secondary metabolite biosynthesis; flavonoid biosynthesis. Functionally, the primary product of this enzyme is 4,2',4',6'-tetrahydroxychalcone (also termed naringenin-chalcone or chalcone) which can under specific conditions spontaneously isomerize into naringenin. This chain is Chalcone synthase, found in Rhododendron dauricum (Azalea daurica).